Reading from the N-terminus, the 275-residue chain is Large ribosomal subunit protein uL2 (275 aa).

The tract at residues Val223–Lys275 is disordered. A compositionally biased stretch (basic and acidic residues) spans Asp229–Glu244.

It belongs to the universal ribosomal protein uL2 family. In terms of assembly, part of the 50S ribosomal subunit. Forms a bridge to the 30S subunit in the 70S ribosome.

Functionally, one of the primary rRNA binding proteins. Required for association of the 30S and 50S subunits to form the 70S ribosome, for tRNA binding and peptide bond formation. It has been suggested to have peptidyltransferase activity; this is somewhat controversial. Makes several contacts with the 16S rRNA in the 70S ribosome. This chain is Large ribosomal subunit protein uL2, found in Bordetella petrii (strain ATCC BAA-461 / DSM 12804 / CCUG 43448).